A 209-amino-acid chain; its full sequence is Small ribosomal subunit protein uS4 (209 aa).

Positions 22–45 are disordered; sequence RGRNPLLRKPNPPGQHGMQRKKKS. The S4 RNA-binding domain maps to 93-154; the sequence is CRLDNIVYRL…KSRRLAIVTE (62 aa).

Belongs to the universal ribosomal protein uS4 family. Part of the 30S ribosomal subunit. Contacts protein S5. The interaction surface between S4 and S5 is involved in control of translational fidelity.

Its function is as follows. One of the primary rRNA binding proteins, it binds directly to 16S rRNA where it nucleates assembly of the body of the 30S subunit. In terms of biological role, with S5 and S12 plays an important role in translational accuracy. This is Small ribosomal subunit protein uS4 from Chlamydia muridarum (strain MoPn / Nigg).